Consider the following 351-residue polypeptide: tRNA-specific 2-thiouridylase MnmA 2 (351 aa).

Residues 13–20 (GMSGGTDS) and phenylalanine 39 contribute to the ATP site. The Nucleophile role is filled by cysteine 98. Cysteine 98 and cysteine 195 are oxidised to a cystine. Position 122 (glycine 122) interacts with ATP. Residues 144–146 (KDQ) are interaction with tRNA. Residue cysteine 195 is the Cysteine persulfide intermediate of the active site. Residues 301-302 (RY) are interaction with tRNA.

This sequence belongs to the MnmA/TRMU family.

The protein resides in the cytoplasm. It catalyses the reaction S-sulfanyl-L-cysteinyl-[protein] + uridine(34) in tRNA + AH2 + ATP = 2-thiouridine(34) in tRNA + L-cysteinyl-[protein] + A + AMP + diphosphate + H(+). Catalyzes the 2-thiolation of uridine at the wobble position (U34) of tRNA, leading to the formation of s(2)U34. This Phocaeicola vulgatus (strain ATCC 8482 / DSM 1447 / JCM 5826 / CCUG 4940 / NBRC 14291 / NCTC 11154) (Bacteroides vulgatus) protein is tRNA-specific 2-thiouridylase MnmA 2.